Here is a 274-residue protein sequence, read N- to C-terminus: Thymidylate synthase (274 aa).

Residue Arg21 coordinates dUMP. Position 51 (His51) interacts with (6R)-5,10-methylene-5,6,7,8-tetrahydrofolate. 123–124 (RR) contacts dUMP. Cys156 serves as the catalytic Nucleophile. DUMP is bound by residues 176-179 (RSAD), Asn187, and 217-219 (HIY). Asp179 is a (6R)-5,10-methylene-5,6,7,8-tetrahydrofolate binding site. Ser273 contacts (6R)-5,10-methylene-5,6,7,8-tetrahydrofolate.

Belongs to the thymidylate synthase family. Bacterial-type ThyA subfamily. Homodimer.

The protein resides in the cytoplasm. It catalyses the reaction dUMP + (6R)-5,10-methylene-5,6,7,8-tetrahydrofolate = 7,8-dihydrofolate + dTMP. The protein operates within pyrimidine metabolism; dTTP biosynthesis. Catalyzes the reductive methylation of 2'-deoxyuridine-5'-monophosphate (dUMP) to 2'-deoxythymidine-5'-monophosphate (dTMP) while utilizing 5,10-methylenetetrahydrofolate (mTHF) as the methyl donor and reductant in the reaction, yielding dihydrofolate (DHF) as a by-product. This enzymatic reaction provides an intracellular de novo source of dTMP, an essential precursor for DNA biosynthesis. The protein is Thymidylate synthase of Francisella tularensis subsp. tularensis (strain SCHU S4 / Schu 4).